Here is a 590-residue protein sequence, read N- to C-terminus: Hyaluronan synthase 1 (590 aa).

The Cytoplasmic segment spans residues 1–31 (MKDKAAATMEIPEDPGIPKNLERKRPIVWRM). The chain crosses the membrane as a helical span at residues 32–52 (IYYSFAVLLLAAFTAAYVTEF). Topologically, residues 53–60 (QILTHEDV) are extracellular. A helical membrane pass occupies residues 61-81 (LFSLGLYGLVMFLHLMMQSLF). Residues 82-401 (AYLEIRRINK…YNAQWWYKHH (320 aa)) are Cytoplasmic-facing. The helical transmembrane segment at 402 to 422 (IWMTYESVVHFIFPFFITATV) threads the bilayer. Over 423-425 (IRL) the chain is Extracellular. A helical membrane pass occupies residues 426–446 (LYASTIWNVVWLLLCIQIMSV). Over 447–456 (LKSLYACWLR) the chain is Cytoplasmic. Residues 457–477 (GNPIMLLMSLYSMLYMTGLLP) traverse the membrane as a helical segment. At 478-505 (SKYFAMLTINKSGWGTSGRKKIVGNYMP) the chain is on the extracellular side. The helical transmembrane segment at 506–526 (VLPLSIWMAVLCGGVGYSIYM) threads the bilayer. Topologically, residues 527–543 (DCHQDWSTPEKQKELYH) are cytoplasmic. A helical membrane pass occupies residues 544–564 (LLYGCISYTLYWVLMALMYWV). The Extracellular segment spans residues 565–588 (WVKRCCRKRSQTVTLVHDIPERLV).

The protein belongs to the NodC/HAS family. Requires Mg(2+) as cofactor.

The protein localises to the membrane. The catalysed reaction is [hyaluronan](n) + UDP-N-acetyl-alpha-D-glucosamine = N-acetyl-beta-D-glucosaminyl-(1-&gt;4)-[hyaluronan](n) + UDP + H(+). The enzyme catalyses N-acetyl-beta-D-glucosaminyl-(1-&gt;4)-[hyaluronan](n) + UDP-alpha-D-glucuronate = [hyaluronan](n+1) + UDP + H(+). It participates in glycan biosynthesis; hyaluronan biosynthesis. Its function is as follows. Catalyzes the addition of GlcNAc or GlcUA monosaccharides to the nascent hyaluronan polymer. Therefore, it is essential to hyaluronan synthesis a major component of most extracellular matrices that has a structural role in tissues architectures and regulates cell adhesion, migration and differentiation. Also able to catalyze the synthesis of chito-oligosaccharide depending on the substrate. The protein is Hyaluronan synthase 1 (has1) of Xenopus tropicalis (Western clawed frog).